A 442-amino-acid chain; its full sequence is UPF0489 protein C5orf22 (442 aa).

The interval 175-210 (SSAKKPKLALEDSENTASTNCDSSSEGLEKDTATQR) is disordered. The span at 189 to 200 (NTASTNCDSSSE) shows a compositional bias: polar residues.

This sequence belongs to the UPF0489 family.

This is UPF0489 protein C5orf22 (C5orf22) from Homo sapiens (Human).